Here is a 247-residue protein sequence, read N- to C-terminus: Probable transcriptional regulatory protein ABO_0750 (247 aa).

The protein belongs to the TACO1 family.

Its subcellular location is the cytoplasm. The sequence is that of Probable transcriptional regulatory protein ABO_0750 from Alcanivorax borkumensis (strain ATCC 700651 / DSM 11573 / NCIMB 13689 / SK2).